We begin with the raw amino-acid sequence, 215 residues long: Pyridoxine/pyridoxamine 5'-phosphate oxidase (215 aa).

Substrate-binding positions include 9 to 12 (RREY) and Lys69. FMN contacts are provided by residues 64–69 (RILLLK), 79–80 (FT), Lys86, and Gln108. Substrate contacts are provided by Tyr126, Arg130, and Ser134. FMN-binding positions include 143 to 144 (QS) and Trp188. 194-196 (RLH) is a binding site for substrate. Arg198 provides a ligand contact to FMN.

This sequence belongs to the pyridoxamine 5'-phosphate oxidase family. In terms of assembly, homodimer. The cofactor is FMN.

It carries out the reaction pyridoxamine 5'-phosphate + O2 + H2O = pyridoxal 5'-phosphate + H2O2 + NH4(+). It catalyses the reaction pyridoxine 5'-phosphate + O2 = pyridoxal 5'-phosphate + H2O2. It functions in the pathway cofactor metabolism; pyridoxal 5'-phosphate salvage; pyridoxal 5'-phosphate from pyridoxamine 5'-phosphate: step 1/1. The protein operates within cofactor metabolism; pyridoxal 5'-phosphate salvage; pyridoxal 5'-phosphate from pyridoxine 5'-phosphate: step 1/1. Catalyzes the oxidation of either pyridoxine 5'-phosphate (PNP) or pyridoxamine 5'-phosphate (PMP) into pyridoxal 5'-phosphate (PLP). This Pseudomonas paraeruginosa (strain DSM 24068 / PA7) (Pseudomonas aeruginosa (strain PA7)) protein is Pyridoxine/pyridoxamine 5'-phosphate oxidase.